The following is a 233-amino-acid chain: MSKLSKRMRVIREKVDTAKQYDLDDAFLLLKKLATAKFTESVDVAVNLGIDARKSDQNVRGATVLPHGTGRSVRVAVFTQGANAEAANNAGAELVGMDDLAAQIRNGEMNFDVVIASPDAMRVVGQLGQILGPRGLMPNPKVGTVTPNIAEAVTNAKAGQIRYRNDKNGIIHTTIGKIDFDAHKLKENLEALISALKKAKPATAKGLYIKKISLSTTMGAGLMIDQSALSSLV.

It belongs to the universal ribosomal protein uL1 family. Part of the 50S ribosomal subunit.

Its function is as follows. Binds directly to 23S rRNA. The L1 stalk is quite mobile in the ribosome, and is involved in E site tRNA release. Functionally, protein L1 is also a translational repressor protein, it controls the translation of the L11 operon by binding to its mRNA. The chain is Large ribosomal subunit protein uL1 from Hamiltonella defensa subsp. Acyrthosiphon pisum (strain 5AT).